Reading from the N-terminus, the 176-residue chain is Ribosome maturation factor RimM (176 aa).

Residues 97 to 176 (EDEFYWRDLI…QILVDWDPDF (80 aa)) enclose the PRC barrel domain.

It belongs to the RimM family. As to quaternary structure, binds ribosomal protein uS19.

It localises to the cytoplasm. Its function is as follows. An accessory protein needed during the final step in the assembly of 30S ribosomal subunit, possibly for assembly of the head region. Essential for efficient processing of 16S rRNA. May be needed both before and after RbfA during the maturation of 16S rRNA. It has affinity for free ribosomal 30S subunits but not for 70S ribosomes. The protein is Ribosome maturation factor RimM of Shewanella oneidensis (strain ATCC 700550 / JCM 31522 / CIP 106686 / LMG 19005 / NCIMB 14063 / MR-1).